The primary structure comprises 472 residues: MATKCTKCGPGYSTPLEAMKGPREEIVYLPCIYRNTGTEAPDYLATVDVDPKSPQYSQVIHRLPMPYLKDELHHSGWNTCSSCFGDSTKSRNKLILPGLISSRIYVVDVGSEPRAPKLHKVIEASEIQAKCNVSSLHTSHCLASGEVMVSTLGDLQGNGKGSFVLLDGETFEVKGTWEKPGDAAPMGYDFWYQPRHNVMVSTEWAAPNVFKDGFNPAHVEAGLYGSRIFVWDWQRHEIIQTLQMTDGLIPLEIRFLHDPSATQGFVGCALSSNIQRFYKNAEGTWSVEKVIQVPSKKVKGWMLPEMPGLITDILLSLDDRFLYFSNWLHGDIRQYDISNPQKPRLAGQIFLGGSIVRGGSVQVLEDQELTCQPEPLVVKGKRIPGGPQMIQLSLDGKRLYATTSLYSAWDKQFYPDLIREGSMMLQIDVDTVNGGLKLNPNFLVDFGKEPLGPALAHELRYPGGDCSSDIWI.

Ala-2 carries the N-acetylalanine modification. Ser-111 and Ser-467 each carry phosphoserine.

Belongs to the selenium-binding protein family. Interacts with USP33. Post-translationally, the N-terminus is blocked. In terms of tissue distribution, highly expressed in liver, kidney and, to a lesser extent, lung.

It localises to the nucleus. It is found in the cytoplasm. The protein localises to the cytosol. The protein resides in the membrane. It carries out the reaction methanethiol + O2 + H2O = hydrogen sulfide + formaldehyde + H2O2 + H(+). It participates in organosulfur degradation. Its function is as follows. Catalyzes the oxidation of methanethiol, an organosulfur compound known to be produced in substantial amounts by gut bacteria. Selenium-binding protein which may be involved in the sensing of reactive xenobiotics in the cytoplasm. May be involved in intra-Golgi protein transport. This chain is Methanethiol oxidase (Selenbp1), found in Mus musculus (Mouse).